A 235-amino-acid polypeptide reads, in one-letter code: Small ribosomal subunit protein uS3 (235 aa).

Positions 39 to 107 (IREFIKEECK…ELHLNIVEVR (69 aa)) constitute a KH type-2 domain. The tract at residues 213–235 (QARDRKAQELQDGPAPRGAGGRR) is disordered.

Belongs to the universal ribosomal protein uS3 family. Part of the 30S ribosomal subunit. Forms a tight complex with proteins S10 and S14.

Its function is as follows. Binds the lower part of the 30S subunit head. Binds mRNA in the 70S ribosome, positioning it for translation. The protein is Small ribosomal subunit protein uS3 of Ruegeria pomeroyi (strain ATCC 700808 / DSM 15171 / DSS-3) (Silicibacter pomeroyi).